Reading from the N-terminus, the 436-residue chain is MRQALPLVTRQGDRIAIVSGLRTPFARQATAFHGIPAVDLGKMVVGELLARSEIPADAIEQLVFGQVVQMPEAPNIAREIVLGTGMNVHTDAYSVSRACATSFQAVANVAESLMAGTIRAGIAGGADSSSVLPIGVSKALARVLVDVNKARTTRQRLTLFSRLRLRDLLPVPPAVAEYSTGLRMGDTAEQMAKTYGITREQQDALAHRSHQRAAQAWAEGKLAEEVMTTYVPPYKNPFAEDNNIRGASTLADYAKLRPAFDRKHGSVTAANSTPLTDGAAAVILMTESRAKELGLRPLGYLRSYAFTAIDVWQDMLLGPAWSTPLALERAGLTMADLTLFDMHEAFAAQTLANLQLLGSERFACEVLGRAQATGEVDDAKFNVLGGSIAYGHPFAATGARMITQTLHELRRRGGGFGLVTACAAGGLGAAMVLEAE.

C99 acts as the Acyl-thioester intermediate in catalysis. Residues H392 and C422 each act as proton acceptor in the active site.

Belongs to the thiolase-like superfamily. Thiolase family. In terms of assembly, heterotetramer of two alpha chains (FadJ) and two beta chains (FadI).

Its subcellular location is the cytoplasm. It carries out the reaction an acyl-CoA + acetyl-CoA = a 3-oxoacyl-CoA + CoA. It participates in lipid metabolism; fatty acid beta-oxidation. Functionally, catalyzes the final step of fatty acid oxidation in which acetyl-CoA is released and the CoA ester of a fatty acid two carbons shorter is formed. This Salmonella heidelberg (strain SL476) protein is 3-ketoacyl-CoA thiolase.